The following is a 306-amino-acid chain: Ribosomal protein L11 methyltransferase (306 aa).

The S-adenosyl-L-methionine site is built by Thr154, Gly179, Asp201, and Asn242.

The protein belongs to the methyltransferase superfamily. PrmA family.

The protein resides in the cytoplasm. The enzyme catalyses L-lysyl-[protein] + 3 S-adenosyl-L-methionine = N(6),N(6),N(6)-trimethyl-L-lysyl-[protein] + 3 S-adenosyl-L-homocysteine + 3 H(+). In terms of biological role, methylates ribosomal protein L11. The chain is Ribosomal protein L11 methyltransferase from Xylella fastidiosa (strain Temecula1 / ATCC 700964).